The chain runs to 456 residues: Divalent metal cation transporter MntH (456 aa).

Transmembrane regions (helical) follow at residues 47–67 (ALSFFGPGYLVAVGYMDPGNW), 77–97 (FGYALLSVVLLSNLMAVLLQA), 123–143 (AWPLWLLAELAICATDLAEVI), 151–171 (LLFGIPLEIGVILTAVDVLLV), 184–204 (ALIITLLGVIALCFLTQIIMA), 227–247 (MLYIALGIIGATVMPHNLYLH), 276–296 (IALTFALVINASILILAAASF), 316–336 (PLLGSAIAPALFAIALLCCGL), 369–389 (FVAIVPAAIVTILYGSQGTTE), 392–412 (ILSQVVLSLQLPFAVIPLVIF), and 422–442 (LAAAPWVTFLAAITAAIIVVL).

Belongs to the NRAMP family.

It localises to the cell inner membrane. H(+)-stimulated, divalent metal cation uptake system. In Brucella suis biovar 1 (strain 1330), this protein is Divalent metal cation transporter MntH.